A 120-amino-acid chain; its full sequence is uncharacterized protein (120 aa).

The first 18 residues, 1-18, serve as a signal peptide directing secretion; that stretch reads MRSWIPLLVLFAVLAVFA. Positions 20 to 99 are disordered; it reads AGKSSESDES…GDNRVKRDGL (80 aa).

This is an uncharacterized protein from Caenorhabditis elegans.